Consider the following 1257-residue polypeptide: Insulin receptor substrate 4 (1257 aa).

The region spanning 78–199 is the PH domain; that stretch reads EVCKRGYLRK…WYLLLSRLIL (122 aa). The 105-residue stretch at 231-335 folds into the IRS-type PTB domain; the sequence is YKDVWQVIVK…EKMRALCADE (105 aa). Disordered regions lie at residues 406-653, 678-921, and 1179-1257; these read VAHS…GGRF, IPEG…SSDY, and QDVA…KRGR. The segment covering 408–424 has biased composition (basic residues); sequence HSRRGRLHLPRGRRSRR. Positions 487-490 match the YXXM motif 1 motif; the sequence is YMPM. Residues 495-509 show a composition bias toward gly residues; that stretch reads SGNGRGSGGGQGSNG. The span at 510 to 524 shows a compositional bias: low complexity; the sequence is QGSSSHSSGGNQCSG. Composition is skewed to gly residues over residues 525 to 542 and 551 to 599; these read EGQGSRGGQGSNGQGSGG and GTAG…SGKG. Residues 627 to 640 are compositionally biased toward pro residues; sequence MPPPPPPPPPPPPA. Residues 641–650 show a composition bias toward gly residues; it reads GGTGGKGKSG. Positions 678-800 are CRK-binding; sequence IPEGAARGPH…KNPRNPQGGS (123 aa). Short sequence motifs (YXXM motif) lie at residues 700–703, 717–720, and 743–746; these read YVPM, YMPM, and YMMM. Over residues 750–761 the composition is skewed to pro residues; that stretch reads VSPPPAPSPPKA. Residues 763–774 show a composition bias toward basic and acidic residues; sequence DTNKEDDSKDND. The short motif at 779 to 782 is the YXXM motif 5 element; it reads YMFM. A compositionally biased stretch (low complexity) spans 800–810; it reads SSSKSWSSYFS. Residues 815-826 show a composition bias toward polar residues; the sequence is FRSSPLGQNDNS. The short motif at 828 to 831 is the YXXM motif 6 element; it reads YVPM. The span at 840 to 855 shows a compositional bias: basic and acidic residues; it reads GLDKEVSYNWDPKDAA. Residues 895–897 are GRB2-binding; that stretch reads ITK. Y921 bears the Phosphotyrosine mark. Positions 921-924 match the YXXM motif 7 motif; the sequence is YVNM. The span at 1236-1257 shows a compositional bias: basic and acidic residues; it reads DTHVRMDFARRDNQFDSPKRGR.

As to quaternary structure, interacts with SOCS6 in response to stimulation with either insulin or IGF1. Interacts with CRK and CRKL. Interaction with CRK is stronger than with CRKL. Interacts with CRK via the phosphorylated YXXM motifs. Interacts with GRB2 and PIK3R1. Interacts with PLC-gamma, SHC1, PTK6, PPP4C and NISCH. Interacts with ASB4; this interaction promotes IRS4 proteasomal degradation. In terms of processing, phosphorylated on tyrosine residues in response to both insulin and IGF1 signaling. Phosphorylated on Tyr-921 in response to FGF2 signaling. Phosphorylation of Tyr-921 is required for GRB2, phospholipase C-gamma and phosphatidylinositol 3-kinase interaction. Ubiquitinated in a ASB4-dependent manner, leading to proteasomal degradation. As to expression, expressed in myoblasts. Expressed in liver and hepatocellular carcinoma.

It is found in the cell membrane. Its function is as follows. Acts as an interface between multiple growth factor receptors possessing tyrosine kinase activity, such as insulin receptor, IGF1R and FGFR1, and a complex network of intracellular signaling molecules containing SH2 domains. Involved in the IGF1R mitogenic signaling pathway. Promotes the AKT1 signaling pathway and BAD phosphorylation during insulin stimulation without activation of RPS6KB1 or the inhibition of apoptosis. Interaction with GRB2 enhances insulin-stimulated mitogen-activated protein kinase activity. May be involved in nonreceptor tyrosine kinase signaling in myoblasts. Plays a pivotal role in the proliferation/differentiation of hepatoblastoma cell through EPHB2 activation upon IGF1 stimulation. May play a role in the signal transduction in response to insulin and to a lesser extent in response to IL4 and GH on mitogenesis. Plays a role in growth, reproduction and glucose homeostasis. May act as negative regulators of the IGF1 signaling pathway by suppressing the function of IRS1 and IRS2. The polypeptide is Insulin receptor substrate 4 (IRS4) (Homo sapiens (Human)).